Reading from the N-terminus, the 508-residue chain is MEELQRYLKMDRSRERDFLYPLLFQEYIYALAHDFGLTKSIPYESMQILSYDNKYSSLIVKRLIIRMYQQKHLIILDNDSNQKNFLGHNKNLYSQMISEGFAVIVEIPFALRLVSSYQGKEIEKSINLRSIHSTFPFLEDKFVHLNHVLDILIPYPIHLELLVQNLRCWIQDASFLHLLRFFLYEYHNWNSLTTQKTKQNPLFFKENRRFFLFLYNFHVYESESIFLFLRKKSYHLRSTSSIAFLDRTHFYGKIEHFQVVFRNYFHTILWLFKDPFMHYFRYQGKSIMSSKGTPLLMKKWKYYLVNLWECHFYFWSQPDRIHINQLSNHFLDFLGYLSSVRPNPSVVRNQMLENAFIIDIAINKLDTIVPIIPLIGSLAKAKFCNLSGQPVSKPAWTDSPDSDIIDRFGRICRNVSHYYSGSSKKKTLYRIKYILRLSCARTLARKHKSTVRSFLKRLGSEFLEEFLIEEEQVLSFILPKISSSSQRLSKERVWYFDIIRINDLMDLS.

Belongs to the intron maturase 2 family. MatK subfamily.

It localises to the plastid. It is found in the chloroplast. In terms of biological role, usually encoded in the trnK tRNA gene intron. Probably assists in splicing its own and other chloroplast group II introns. In Ranunculus glacialis (Glacier buttercup), this protein is Maturase K.